The primary structure comprises 345 residues: Sesquiterpene synthase GALMADRAFT_104215 (345 aa).

Asp91, Asn226, Ser230, and Glu234 together coordinate Mg(2+). The DDXXD motif signature appears at 91 to 95 (DEFTD). (2E,6E)-farnesyl diphosphate is bound by residues Arg316 and Tyr317.

The protein belongs to the terpene synthase family. Mg(2+) is required as a cofactor.

It carries out the reaction (2E,6E)-farnesyl diphosphate = beta-gurjunene + diphosphate. Functionally, terpene cyclase that catalyzes the cyclization of farnesyl diphosphate (FPP) to beta-gurjunene. The polypeptide is Sesquiterpene synthase GALMADRAFT_104215 (Galerina marginata (strain CBS 339.88)).